A 37-amino-acid chain; its full sequence is Mu-agatoxin-Aa1d (37 aa).

4 disulfides stabilise this stretch: cysteine 2–cysteine 18, cysteine 9–cysteine 23, cysteine 17–cysteine 33, and cysteine 25–cysteine 31. Asparagine 37 is subject to Asparagine amide.

The protein belongs to the neurotoxin 07 (Beta/delta-agtx) family. 03 (aga-4) subfamily. Aga sub-subfamily. As to expression, expressed by the venom gland.

The protein localises to the secreted. In terms of biological role, insecticidal neurotoxin that induces an irreversible spastic paralysis when injected into insects. Modifies presynaptic voltage-gated sodium channels (Nav), causing them to open at the normal resting potential of the nerve. This leads to spontaneous release of neurotransmitter and repetitive action potentials in motor neurons. This is Mu-agatoxin-Aa1d from Agelenopsis aperta (North American funnel-web spider).